We begin with the raw amino-acid sequence, 156 residues long: Endogenous retrovirus group K member 18 Pro protein (156 aa).

In terms of domain architecture, Peptidase A2 spans 21–96 (LEGLVDTGAD…IPLNLWGRDL (76 aa)). Residue D26 is part of the active site. Residues 111-156 (YSPMSQKIMTKMGYIPGKGLGKNEDGIKVPIEAKINHGREGTGYPF) form the G-patch domain.

The protein belongs to the peptidase A2 family. HERV class-II K(HML-2) subfamily. As to quaternary structure, active as a homodimer. In terms of processing, autoproteolytically processed at the N-terminus. Expected C-terminal autoprocessing not detected. The sequence shown is that of the processed Pro protein.

It carries out the reaction Processing at the authentic HIV-1 PR recognition site and release of the mature p17 matrix and the p24 capsid protein, as a result of the cleavage of the -SQNY-|-PIVQ- cleavage site.. Retroviral proteases have roles in the processing of the primary translation products and the maturation of the viral particle. Endogenous Pro proteins may have kept, lost or modified their original function during evolution. The chain is Endogenous retrovirus group K member 18 Pro protein (ERVK-18) from Homo sapiens (Human).